A 155-amino-acid chain; its full sequence is S-ribosylhomocysteine lyase (155 aa).

Fe cation contacts are provided by His-57, His-61, and Cys-124.

The protein belongs to the LuxS family. As to quaternary structure, homodimer. Fe cation is required as a cofactor.

It carries out the reaction S-(5-deoxy-D-ribos-5-yl)-L-homocysteine = (S)-4,5-dihydroxypentane-2,3-dione + L-homocysteine. Functionally, involved in the synthesis of autoinducer 2 (AI-2) which is secreted by bacteria and is used to communicate both the cell density and the metabolic potential of the environment. The regulation of gene expression in response to changes in cell density is called quorum sensing. Catalyzes the transformation of S-ribosylhomocysteine (RHC) to homocysteine (HC) and 4,5-dihydroxy-2,3-pentadione (DPD). The polypeptide is S-ribosylhomocysteine lyase (Listeria monocytogenes serotype 4b (strain CLIP80459)).